Consider the following 125-residue polypeptide: Large ribosomal subunit protein bL12 (125 aa).

This sequence belongs to the bacterial ribosomal protein bL12 family. As to quaternary structure, homodimer. Part of the ribosomal stalk of the 50S ribosomal subunit. Forms a multimeric L10(L12)X complex, where L10 forms an elongated spine to which 2 to 4 L12 dimers bind in a sequential fashion. Binds GTP-bound translation factors.

Functionally, forms part of the ribosomal stalk which helps the ribosome interact with GTP-bound translation factors. Is thus essential for accurate translation. This chain is Large ribosomal subunit protein bL12, found in Anaeromyxobacter sp. (strain Fw109-5).